Consider the following 111-residue polypeptide: Large ribosomal subunit protein uL24 (111 aa).

This sequence belongs to the universal ribosomal protein uL24 family. As to quaternary structure, part of the 50S ribosomal subunit.

Functionally, one of two assembly initiator proteins, it binds directly to the 5'-end of the 23S rRNA, where it nucleates assembly of the 50S subunit. Its function is as follows. One of the proteins that surrounds the polypeptide exit tunnel on the outside of the subunit. This Bifidobacterium animalis subsp. lactis (strain AD011) protein is Large ribosomal subunit protein uL24.